A 144-amino-acid chain; its full sequence is Large ribosomal subunit protein uL15 (144 aa).

Residues 1–48 form a disordered region; it reads MQLNNLKPAAGSKHAKRRVGRGIGSGLGKTAGRGHKGQKSRSGGFHKV. Residues 21 to 31 are compositionally biased toward gly residues; sequence RGIGSGLGKTA.

The protein belongs to the universal ribosomal protein uL15 family. Part of the 50S ribosomal subunit.

Functionally, binds to the 23S rRNA. The protein is Large ribosomal subunit protein uL15 of Cupriavidus pinatubonensis (strain JMP 134 / LMG 1197) (Cupriavidus necator (strain JMP 134)).